A 237-amino-acid polypeptide reads, in one-letter code: MSNAYKRVLLKLSGEALMGDDAFGINRATIERMVADIAEVVGLGTQLAVVIGGGNIFRGVAGGAAGMDRATADYMGMLATMMNALALQDAMRHAGIVARVQSALRMDQVVEPYIRPRAIRQLEEGKVVIFAAGTGNPFFTTDTAAALRGSEVGAEVVLKATKVDGVYSADPKKDPSATRYATISFDEAISRNLQVMDATAFALCRDQKLPIRVFSINKPGALKRIVLGEDEGTLVHV.

An ATP-binding site is contributed by 11-14 (KLSG). Residue G53 participates in UMP binding. Residues G54 and R58 each contribute to the ATP site. Residues D73 and 134-141 (TGNPFFTT) each bind UMP. T161, Y167, and D170 together coordinate ATP.

This sequence belongs to the UMP kinase family. Homohexamer.

The protein resides in the cytoplasm. It carries out the reaction UMP + ATP = UDP + ADP. It functions in the pathway pyrimidine metabolism; CTP biosynthesis via de novo pathway; UDP from UMP (UMPK route): step 1/1. Inhibited by UTP. In terms of biological role, catalyzes the reversible phosphorylation of UMP to UDP. The sequence is that of Uridylate kinase from Burkholderia ambifaria (strain ATCC BAA-244 / DSM 16087 / CCUG 44356 / LMG 19182 / AMMD) (Burkholderia cepacia (strain AMMD)).